Reading from the N-terminus, the 379-residue chain is Queuine tRNA-ribosyltransferase (379 aa).

Aspartate 94 (proton acceptor) is an active-site residue. Substrate is bound by residues 94–98 (DSGGF), aspartate 148, glutamine 191, and glycine 218. Residues 249 to 255 (GVGSPDA) form an RNA binding region. Aspartate 268 serves as the catalytic Nucleophile. The interval 273–277 (TRIAR) is RNA binding; important for wobble base 34 recognition. Positions 306, 308, 311, and 337 each coordinate Zn(2+).

This sequence belongs to the queuine tRNA-ribosyltransferase family. Homodimer. Within each dimer, one monomer is responsible for RNA recognition and catalysis, while the other monomer binds to the replacement base PreQ1. Requires Zn(2+) as cofactor.

It carries out the reaction 7-aminomethyl-7-carbaguanine + guanosine(34) in tRNA = 7-aminomethyl-7-carbaguanosine(34) in tRNA + guanine. Its pathway is tRNA modification; tRNA-queuosine biosynthesis. Functionally, catalyzes the base-exchange of a guanine (G) residue with the queuine precursor 7-aminomethyl-7-deazaguanine (PreQ1) at position 34 (anticodon wobble position) in tRNAs with GU(N) anticodons (tRNA-Asp, -Asn, -His and -Tyr). Catalysis occurs through a double-displacement mechanism. The nucleophile active site attacks the C1' of nucleotide 34 to detach the guanine base from the RNA, forming a covalent enzyme-RNA intermediate. The proton acceptor active site deprotonates the incoming PreQ1, allowing a nucleophilic attack on the C1' of the ribose to form the product. After dissociation, two additional enzymatic reactions on the tRNA convert PreQ1 to queuine (Q), resulting in the hypermodified nucleoside queuosine (7-(((4,5-cis-dihydroxy-2-cyclopenten-1-yl)amino)methyl)-7-deazaguanosine). This Oceanobacillus iheyensis (strain DSM 14371 / CIP 107618 / JCM 11309 / KCTC 3954 / HTE831) protein is Queuine tRNA-ribosyltransferase.